A 446-amino-acid chain; its full sequence is uncharacterized protein (446 aa).

The tract at residues T141–S282 is disordered. Residues N159–S170 are compositionally biased toward polar residues. The segment covering I194–A210 has biased composition (basic and acidic residues). Residues S200, S202, S212, and S214 each carry the phosphoserine modification. Composition is skewed to low complexity over residues S211 to S221 and S229 to S239. S251 carries the post-translational modification Phosphoserine. Residues G269 to R280 show a composition bias toward basic residues. S282 and S307 each carry phosphoserine.

This is an uncharacterized protein from Drosophila melanogaster (Fruit fly).